We begin with the raw amino-acid sequence, 102 residues long: Biotrophy-associated secreted protein 2 (102 aa).

The first 19 residues, 1 to 19 (MVRVSTFAAILAMALSVTA), serve as a signal peptide directing secretion. A glycan (N-linked (GlcNAc...) asparagine) is linked at asparagine 46.

It localises to the secreted. Functionally, secreted effector involved in biotrophic colonization of plant cells. This chain is Biotrophy-associated secreted protein 2, found in Pyricularia oryzae (strain 70-15 / ATCC MYA-4617 / FGSC 8958) (Rice blast fungus).